A 280-amino-acid chain; its full sequence is MERVNLGGLGYDNGGVMMTRDPKPRLRWTADLHDRFVDAVAKLGGADKATPKSVLKLMGLKGLTLYHLKSHLQKYRLGQQQGKKQNRTEQNKENAGSSYVHFDNCSQGGISNDSRFDNHQRQSGNVPFAEAMRHQVDAQQRFQEQLEVQKKLQMRMEAQGKYLLTLLEKAQKSLPCGNAGETDKGQFSDFNLALSGLVGSDRKNEKAGLVTDISHLNGGDSSQEFRLCGEQEKIETGDACVKPESGFVHFDLNSKSGYDLLNCGKYGIEVKPNVIGDRLQ.

One can recognise an HTH myb-type domain in the interval Arg20–Gln80. A DNA-binding region (H-T-H motif) is located at residues Pro51 to Arg76. The disordered stretch occupies residues Leu77 to Ser98. The interval Ala129–Gln149 is coiled coil. The short motif at Phe142–Glu147 is the LHEQLE element.

The protein belongs to the MYB-CC family.

It is found in the nucleus. This is Myb family transcription factor PHL11 from Arabidopsis thaliana (Mouse-ear cress).